A 109-amino-acid polypeptide reads, in one-letter code: MSERKEGDSGAGVRSAVITQTKPKTQKPAMYRVLLLNDDYTPMEFVVYVLEQFFNKSREDATRIMLHVHQHGVGVCGVYTYEVAETKVAQVVDTARRHQHPLQCTMEKD.

The segment at 1–25 is disordered; that stretch reads MSERKEGDSGAGVRSAVITQTKPKT.

The protein belongs to the ClpS family. Binds to the N-terminal domain of the chaperone ClpA.

Functionally, involved in the modulation of the specificity of the ClpAP-mediated ATP-dependent protein degradation. The polypeptide is ATP-dependent Clp protease adapter protein ClpS (Phenylobacterium zucineum (strain HLK1)).